The sequence spans 299 residues: Tyrosine recombinase XerC (299 aa).

The region spanning 1–85 (MQADLDAFLD…ALRGFYRYLL (85 aa)) is the Core-binding (CB) domain. Positions 106–285 (RLPRTLDADR…DFQHLAAVYD (180 aa)) constitute a Tyr recombinase domain. Catalysis depends on residues Arg-146, Lys-170, His-237, Arg-240, and His-263. Residue Tyr-272 is the O-(3'-phospho-DNA)-tyrosine intermediate of the active site.

Belongs to the 'phage' integrase family. XerC subfamily. Forms a cyclic heterotetrameric complex composed of two molecules of XerC and two molecules of XerD.

It localises to the cytoplasm. Its function is as follows. Site-specific tyrosine recombinase, which acts by catalyzing the cutting and rejoining of the recombining DNA molecules. The XerC-XerD complex is essential to convert dimers of the bacterial chromosome into monomers to permit their segregation at cell division. It also contributes to the segregational stability of plasmids. This Azotobacter vinelandii (strain DJ / ATCC BAA-1303) protein is Tyrosine recombinase XerC.